We begin with the raw amino-acid sequence, 461 residues long: UDP-N-acetylmuramoylalanine--D-glutamate ligase (461 aa).

117 to 123 contacts ATP; that stretch reads GTNGKTT.

This sequence belongs to the MurCDEF family.

The protein localises to the cytoplasm. It catalyses the reaction UDP-N-acetyl-alpha-D-muramoyl-L-alanine + D-glutamate + ATP = UDP-N-acetyl-alpha-D-muramoyl-L-alanyl-D-glutamate + ADP + phosphate + H(+). It participates in cell wall biogenesis; peptidoglycan biosynthesis. Its function is as follows. Cell wall formation. Catalyzes the addition of glutamate to the nucleotide precursor UDP-N-acetylmuramoyl-L-alanine (UMA). The protein is UDP-N-acetylmuramoylalanine--D-glutamate ligase of Synechococcus sp. (strain CC9605).